The sequence spans 728 residues: Fibulin-1 (728 aa).

The signal sequence occupies residues 1–17; it reads MRICFLLLAFLVAETFA. Disulfide bonds link Cys-23-Cys-49, Cys-24-Cys-56, Cys-37-Cys-57, Cys-66-Cys-94, Cys-79-Cys-95, Cys-97-Cys-121, Cys-98-Cys-128, Cys-111-Cys-129, Cys-159-Cys-168, Cys-164-Cys-178, Cys-180-Cys-279, Cys-285-Cys-298, Cys-292-Cys-307, Cys-347-Cys-359, Cys-353-Cys-368, Cys-375-Cys-388, Cys-394-Cys-404, Cys-399-Cys-413, Cys-415-Cys-428, Cys-434-Cys-448, Cys-442-Cys-457, Cys-459-Cys-472, Cys-478-Cys-489, Cys-485-Cys-498, Cys-500-Cys-513, Cys-519-Cys-534, Cys-530-Cys-543, Cys-545-Cys-558, Cys-564-Cys-576, and Cys-569-Cys-585. Anaphylatoxin-like domains lie at 23 to 64, 65 to 96, and 97 to 129; these read CCAG…LLDN, ACDS…ECCD, and CCLL…NKCC. The EGF-like 1 domain maps to 155–194; sequence LGDRCASSHCEHLCHDRGGEKVECSCRSGFDLAPDGMACV. The 86-residue stretch at 195-280 folds into the EGF-like 2; calcium-binding domain; sequence DRNECLTRQS…GWLFQHGHCV (86 aa). The EGF-like 3; calcium-binding domain maps to 281-344; it reads DVDECNLGSH…YPKNGMCNDI (64 aa). One can recognise an EGF-like 4; calcium-binding domain in the interval 343-389; it reads DIDECVTGHNCGAGEECVNTPGSFRCQQKGNLCAHGYEVNGATGFCE. Residues 390–429 enclose the EGF-like 5; calcium-binding domain; that stretch reads DVNECQQGVCGSMECINLPGTYKCKCGPGYEFNDAKKRCE. Residues 430–473 form the EGF-like 6; calcium-binding domain; that stretch reads DVDECIKFAGHVCDLSAECINTIGSFECKCKPGFQLASDGRRCE. One can recognise an EGF-like 7; calcium-binding domain in the interval 474 to 514; sequence DVNECTTGIAACEQKCVNIPGSYQCICDRGFALGPDGTKCE. The EGF-like 8; calcium-binding domain maps to 515–559; the sequence is DIDECSIWAGSGNDLCMGGCINTKGSYLCQCPPGYKIQPDGRTCV. The region spanning 560–610 is the EGF-like 9; calcium-binding domain; the sequence is DVDECAMGECAGSDKVCVNTLGSFKCHSIDCPTNYIHDSLNKNQIADGYSC. The N-linked (GlcNAc...) asparagine glycan is linked to Asn-624.

The protein belongs to the fibulin family. As to quaternary structure, homomultimerizes and interacts with various extracellular matrix components. Expressed in head muscle cells, anterior and posterior intestinal cells. Isoform a: Expressed in male and hermaphrodite gonad, anterior and posterior intestine and pharyngeal basement membranes, body-wall muscle, GLR cells, uterine attachment and mechanosensory neurons. Isoform c: Expressed on ALM/PLM mechanosensory neuron attachments, in flexible tracks connecting the pharyngeal, body-wall-muscle basement membranes and in uterine attachments.

It localises to the secreted. The protein resides in the extracellular space. Its subcellular location is the extracellular matrix. The protein localises to the basement membrane. Incorporated into fibronectin-containing matrix fibers. Plays a role in cell adhesion and migration along protein fibers within the extracellular matrix (ECM). Important for certain developmental processes and contributes to the supramolecular organization of ECM architecture, in particular to those of basement membranes. Functionally, involved in regulating the shape and adhesion of cells in the developing pharynx, intestine, body-wall muscle and gonadal tissue. During gonadogenesis, regulates the width of gonads and the migration of distal tip cells (DTC). Together with type IV collagen let-2 and downstream of metalloprotease mig-17, recruits nidogen nid-1 to the gonad basement membrane thereby inducing basement membrane remodeling required for the directional migration of DTCs. Acts antagonistically with metalloprotease gon-1 to maintain optimal levels of type IV collagen emb-9 in the gonad basement membrane during gonadogenesis. Required for larval development. In terms of biological role, involved in the assembly of the flexible hemicentin-containing tracks found joining the pharynx and body-wall-muscle basement membranes. The polypeptide is Fibulin-1 (fbl-1) (Caenorhabditis elegans).